We begin with the raw amino-acid sequence, 182 residues long: Adenylate kinase (182 aa).

12-17 (GAGKGT) serves as a coordination point for ATP. The tract at residues 32–61 (STGDLLRTEVGAKTPLGQEAAAVMNRGELV) is NMP. Residues T33, R38, 59–61 (ELV), 85–88 (GFPR), and Q92 each bind AMP. Residues 126–132 (SRGRSDD) form an LID region. Position 127 (R127) interacts with ATP. Residues R129 and R140 each coordinate AMP. ATP is bound at residue G168.

Belongs to the adenylate kinase family. As to quaternary structure, monomer.

Its subcellular location is the cytoplasm. The enzyme catalyses AMP + ATP = 2 ADP. It participates in purine metabolism; AMP biosynthesis via salvage pathway; AMP from ADP: step 1/1. Its function is as follows. Catalyzes the reversible transfer of the terminal phosphate group between ATP and AMP. Plays an important role in cellular energy homeostasis and in adenine nucleotide metabolism. The sequence is that of Adenylate kinase from Prochlorococcus marinus (strain MIT 9313).